We begin with the raw amino-acid sequence, 107 residues long: Probable insulin-like peptide beta-type 3 (107 aa).

The N-terminal stretch at 1 to 19 (MKLSVVLALFIIFQLGAAS) is a signal peptide. The propeptide occupies 20–55 (LMRNWMFDFEKELEHDYDDSEIGFHNIHSLMARSRR). 4 disulfide bridges follow: Cys62–Cys90, Cys74–Cys103, Cys78–Cys104, and Cys89–Cys94.

This sequence belongs to the insulin family.

The protein localises to the secreted. The chain is Probable insulin-like peptide beta-type 3 (ins-3) from Caenorhabditis elegans.